Reading from the N-terminus, the 96-residue chain is uncharacterized protein (96 aa).

Residues 57–96 form the CBS domain; that stretch reads MTKKVRTTKKDASISDAAALMDKHNVNRLPVVDENNKLVL.

This is an uncharacterized protein from Methanobacterium ivanovii.